The chain runs to 1037 residues: Signal-induced proliferation-associated protein 1 (1037 aa).

The interval 1-85 (MWAGGVGSPR…ASRPAATPTR (85 aa)) is disordered. Residue Thr-62 is modified to Phosphothreonine. A phosphoserine mark is found at Ser-65, Ser-178, Ser-299, and Ser-309. The Rap-GAP domain maps to 316-534 (LLTLDEQVLS…RTRQQYLQDL (219 aa)). The PDZ domain occupies 682–758 (ELALPRDGQG…VCVTVLPPDE (77 aa)). A phosphoserine mark is found at Ser-812 and Ser-834. 2 disordered regions span residues 830 to 849 (HNSL…LPNT) and 855 to 898 (LVTT…ASIL). Positions 871–881 (PPSQDQSGSPS) are enriched in low complexity. A Phosphoserine modification is found at Ser-907. Residues 943–969 (REGQPISESGDPKEALKCDSEPEPGSL) form a disordered region. A compositionally biased stretch (basic and acidic residues) spans 952–962 (GDPKEALKCDS). Positions 968-1025 (SLSEKVSHLESMLWKLQEDLQREKADRAALEEEVRSLRHNNQRLLAESESAATRLLLA) form a coiled coil.

As to quaternary structure, interacts with RRP1B; the interaction leads to inhibition of SIPA1 GTPase activity. In terms of tissue distribution, preferentially expressed in both fetal and adult lymphohematopoietic tissues.

Its subcellular location is the nucleus. The protein localises to the cytoplasm. It localises to the perinuclear region. It is found in the endomembrane system. Its function is as follows. GTPase activator for the nuclear Ras-related regulatory proteins Rap1, Rsr1 and Ran in vitro, converting them to the putatively inactive GDP-bound state. Affects cell cycle progression. This Mus musculus (Mouse) protein is Signal-induced proliferation-associated protein 1 (Sipa1).